A 75-amino-acid chain; its full sequence is U6-lycotoxin-Ls1d (75 aa).

Positions 1–21 are cleaved as a signal peptide; it reads MKLLLFTALVLVVISLIEVEA. Residues 22–25 constitute a propeptide that is removed on maturation; that stretch reads ENER.

This sequence belongs to the neurotoxin 19 (CSTX) family. 06 (U6-Lctx) subfamily. Post-translationally, contains 4 disulfide bonds. As to expression, expressed by the venom gland.

Its subcellular location is the secreted. The sequence is that of U6-lycotoxin-Ls1d from Lycosa singoriensis (Wolf spider).